A 445-amino-acid chain; its full sequence is NAD-specific glutamate dehydrogenase (445 aa).

Residue Lys124 is part of the active site. Residue 235 to 241 participates in NAD(+) binding; the sequence is GFGNVAW.

It belongs to the Glu/Leu/Phe/Val dehydrogenases family. As to quaternary structure, homohexamer.

The catalysed reaction is L-glutamate + NAD(+) + H2O = 2-oxoglutarate + NH4(+) + NADH + H(+). The chain is NAD-specific glutamate dehydrogenase (gdhB) from Bacteroides fragilis (strain YCH46).